Here is a 349-residue protein sequence, read N- to C-terminus: D-arabinose 1-dehydrogenase (NADP(+)) (349 aa).

Positions 46, 70, 99, 102, 105, 113, and 155 each coordinate Zn(2+).

This sequence belongs to the zinc-containing alcohol dehydrogenase family. Homotetramer. Dimer of dimers. The cofactor is Zn(2+).

It carries out the reaction D-arabinose + NADP(+) = D-arabinono-1,4-lactone + NADPH + H(+). Functionally, participates in a pentose oxidation pathway that converts D-arabinose to 2-oxoglutarate. Catalyzes the NADP-dependent conversion of D-arabinose to D-arabinono-1,4-lactone. In vitro, can also use L-fucose, L-galactose and D-ribose. Shows highest activity with L-fucose, in combinaison with NAD, and lower activity toward L-galactose and D-ribose. When acting on its physiological substrate, D-arabinose, shows a clear preference for NADP over NAD. This is D-arabinose 1-dehydrogenase (NADP(+)) from Saccharolobus solfataricus (strain ATCC 35092 / DSM 1617 / JCM 11322 / P2) (Sulfolobus solfataricus).